A 165-amino-acid chain; its full sequence is Glycine cleavage system H protein, mitochondrial (165 aa).

The region spanning 57-139 (NAIVGISSYA…YEKGWLFKVD (83 aa)) is the Lipoyl-binding domain. Lys98 is modified (N6-lipoyllysine).

The protein belongs to the GcvH family. The glycine cleavage system is composed of four proteins: P, T, L and H. The cofactor is (R)-lipoate.

The protein localises to the mitochondrion. Functionally, the glycine cleavage system catalyzes the degradation of glycine. The H protein shuttles the methylamine group of glycine from the P protein to the T protein. This is Glycine cleavage system H protein, mitochondrial (ppl) from Drosophila melanogaster (Fruit fly).